Here is a 342-residue protein sequence, read N- to C-terminus: N-acetyl-gamma-glutamyl-phosphate reductase (342 aa).

Cys149 is a catalytic residue.

It belongs to the NAGSA dehydrogenase family. Type 1 subfamily.

Its subcellular location is the cytoplasm. The enzyme catalyses N-acetyl-L-glutamate 5-semialdehyde + phosphate + NADP(+) = N-acetyl-L-glutamyl 5-phosphate + NADPH + H(+). It functions in the pathway amino-acid biosynthesis; L-arginine biosynthesis; N(2)-acetyl-L-ornithine from L-glutamate: step 3/4. Its function is as follows. Catalyzes the NADPH-dependent reduction of N-acetyl-5-glutamyl phosphate to yield N-acetyl-L-glutamate 5-semialdehyde. The sequence is that of N-acetyl-gamma-glutamyl-phosphate reductase from Aromatoleum aromaticum (strain DSM 19018 / LMG 30748 / EbN1) (Azoarcus sp. (strain EbN1)).